A 472-amino-acid chain; its full sequence is 6-phosphogluconate dehydrogenase, decarboxylating (472 aa).

NADP(+)-binding positions include 10–15, 33–35, 74–76, and Asn-102; these read GMAVMG, NRT, and VQA. Substrate contacts are provided by residues Asn-102 and 128–130; that span reads SGG. The active-site Proton acceptor is Lys-184. 187–188 is a substrate binding site; sequence HN. The Proton donor role is filled by Glu-191. Tyr-192, Lys-262, Arg-289, Arg-447, and His-453 together coordinate substrate.

It belongs to the 6-phosphogluconate dehydrogenase family. In terms of assembly, homodimer.

The enzyme catalyses 6-phospho-D-gluconate + NADP(+) = D-ribulose 5-phosphate + CO2 + NADPH. The protein operates within carbohydrate degradation; pentose phosphate pathway; D-ribulose 5-phosphate from D-glucose 6-phosphate (oxidative stage): step 3/3. Functionally, catalyzes the oxidative decarboxylation of 6-phosphogluconate to ribulose 5-phosphate and CO(2), with concomitant reduction of NADP to NADPH. This chain is 6-phosphogluconate dehydrogenase, decarboxylating (gnd), found in Lactococcus lactis subsp. cremoris (strain MG1363).